The primary structure comprises 1179 residues: DNA-directed RNA polymerase subunit beta' (1179 aa).

The Zn(2+) site is built by Cys60, Cys62, Cys75, and Cys78. Mg(2+) is bound by residues Asp449, Asp451, and Asp453. Positions 796, 871, 878, and 881 each coordinate Zn(2+).

This sequence belongs to the RNA polymerase beta' chain family. In terms of assembly, the RNAP catalytic core consists of 2 alpha, 1 beta, 1 beta' and 1 omega subunit. When a sigma factor is associated with the core the holoenzyme is formed, which can initiate transcription. The cofactor is Mg(2+). Zn(2+) serves as cofactor.

The catalysed reaction is RNA(n) + a ribonucleoside 5'-triphosphate = RNA(n+1) + diphosphate. DNA-dependent RNA polymerase catalyzes the transcription of DNA into RNA using the four ribonucleoside triphosphates as substrates. This is DNA-directed RNA polymerase subunit beta' from Symbiobacterium thermophilum (strain DSM 24528 / JCM 14929 / IAM 14863 / T).